A 206-amino-acid chain; its full sequence is Phosphoserine phosphatase (206 aa).

The Nucleophile role is filled by D7. The Mg(2+) site is built by D7 and D9. Residue D9 is the Proton donor of the active site. Substrate is bound by residues E16, R52, 95-96, and K140; that span reads SG. D163 lines the Mg(2+) pocket. N166 serves as a coordination point for substrate.

This sequence belongs to the HAD-like hydrolase superfamily. SerB family. Requires Mg(2+) as cofactor.

It catalyses the reaction O-phospho-L-serine + H2O = L-serine + phosphate. The catalysed reaction is O-phospho-D-serine + H2O = D-serine + phosphate. It participates in amino-acid biosynthesis; L-serine biosynthesis; L-serine from 3-phospho-D-glycerate: step 3/3. This is Phosphoserine phosphatase from Wolinella succinogenes (strain ATCC 29543 / DSM 1740 / CCUG 13145 / JCM 31913 / LMG 7466 / NCTC 11488 / FDC 602W) (Vibrio succinogenes).